The chain runs to 403 residues: S-adenosylmethionine synthase (403 aa).

His-15 contacts ATP. Asp-17 is a Mg(2+) binding site. Glu-43 contributes to the K(+) binding site. The L-methionine site is built by Glu-56 and Gln-99. The segment at 99–109 is flexible loop; the sequence is QSPDINQGVDR. Residues 166-168, 232-233, Asp-241, 247-248, Ala-264, and Lys-268 each bind ATP; these read DAK, KF, and RK. Asp-241 is an L-methionine binding site. Lys-272 is an L-methionine binding site.

It belongs to the AdoMet synthase family. Homotetramer; dimer of dimers. The cofactor is Mg(2+). K(+) serves as cofactor.

It is found in the cytoplasm. The catalysed reaction is L-methionine + ATP + H2O = S-adenosyl-L-methionine + phosphate + diphosphate. Its pathway is amino-acid biosynthesis; S-adenosyl-L-methionine biosynthesis; S-adenosyl-L-methionine from L-methionine: step 1/1. In terms of biological role, catalyzes the formation of S-adenosylmethionine (AdoMet) from methionine and ATP. The overall synthetic reaction is composed of two sequential steps, AdoMet formation and the subsequent tripolyphosphate hydrolysis which occurs prior to release of AdoMet from the enzyme. This Xanthomonas axonopodis pv. citri (strain 306) protein is S-adenosylmethionine synthase.